The chain runs to 138 residues: Ribulose bisphosphate carboxylase small subunit (138 aa).

It belongs to the RuBisCO small chain family. As to quaternary structure, heterohexadecamer of 8 large and 8 small subunits.

It localises to the plastid. Its subcellular location is the chloroplast. Its function is as follows. RuBisCO catalyzes two reactions: the carboxylation of D-ribulose 1,5-bisphosphate, the primary event in carbon dioxide fixation, as well as the oxidative fragmentation of the pentose substrate in the photorespiration process. Both reactions occur simultaneously and in competition at the same active site. Although the small subunit is not catalytic it is essential for maximal activity. Carbon dioxide and oxygen bind in the same pocket of the enzyme in a similar manner. This Galdieria sulphuraria (Red alga) protein is Ribulose bisphosphate carboxylase small subunit.